The sequence spans 133 residues: MPLSLATSNRVPEAWRDLIISAMSNLAPLGRDPNTKEFTDELHHLSGEDMGTVMEILGIAVAEGFLEYDDHYRLILGPAGEEYVRLSSRVKVEETRRLTLRRALRRFRDKRRACRHLSLGDKALYDYYYHGGL.

This is an uncharacterized protein from Methanothermobacter marburgensis (strain ATCC BAA-927 / DSM 2133 / JCM 14651 / NBRC 100331 / OCM 82 / Marburg) (Methanobacterium thermoautotrophicum).